The following is a 1787-amino-acid chain: ATP-dependent RNA helicase DEAH11, chloroplastic (1787 aa).

Residues 1–33 constitute a chloroplast transit peptide; it reads MRNSFPPSDGGRSTTDRRQQSFPSSSTNRYNSR. Residues 1 to 75 form a disordered region; that stretch reads MRNSFPPSDG…DRAPSSGFSP (75 aa). The span at 20–60 shows a compositional bias: polar residues; that stretch reads QSFPSSSTNRYNSRSAQSSPPLNHCTTWNQQHSQYHNTNFP. The region spanning 313–477 is the Helicase ATP-binding domain; sequence LKKIHCEQIM…LFDCGILHVN (165 aa). ATP is bound at residue 326–333; that stretch reads GETGSGKS. Residues 424 to 427 carry the DEAH box motif; it reads DEAH. A Helicase C-terminal domain is found at 507–673; that stretch reads DVVKMAVEIH…VALLRMLALG (167 aa). A TRIAD supradomain region spans residues 1557-1764; sequence IELECPICLS…EPCYAHLRTI (208 aa). Zn(2+)-binding residues include C1561, C1564, C1577, H1579, C1582, C1585, C1604, C1609, C1649, C1654, C1672, C1675, C1680, C1683, H1688, C1693, C1719, and C1722. Residues 1561-1609 form an RING-type 1 zinc finger; that stretch reads CPICLSEVDDGYSLEGCSHLFCKACLLEQFEASMRNFDAFPILCSHIDC. An IBR-type zinc finger spans residues 1628–1693; the sequence is DELISASLSA…HLEYHPLITC (66 aa). The RING-type 2; atypical zinc-finger motif lies at 1719-1747; it reads CPICKSTIEKTDGCNHLQCRCGKHICWTC. The active site involves C1732. 2 residues coordinate Zn(2+): C1737 and C1739.

The protein belongs to the DEAD box helicase family. DEAH subfamily.

The protein localises to the plastid. The protein resides in the chloroplast. It catalyses the reaction ATP + H2O = ADP + phosphate + H(+). This chain is ATP-dependent RNA helicase DEAH11, chloroplastic, found in Arabidopsis thaliana (Mouse-ear cress).